The following is a 394-amino-acid chain: Myb-related protein 2 (394 aa).

One can recognise an HTH myb-type domain in the interval 42–102 (TDAKPRLKWT…HLQKYRLSKN (61 aa)). The H-T-H motif DNA-binding region spans 73–98 (PKTIMKVMGIPGLTLYHLKSHLQKYR). A coiled coil region spans residues 148-168 (GEALQMQIEVQRRLHEQLEVQ). The LHEQLE signature appears at 161 to 166 (LHEQLE). The interval 338-363 (LHGHKSQHQQGNNEDHKLETRNRKGM) is disordered. Positions 350–363 (NEDHKLETRNRKGM) are enriched in basic and acidic residues.

This sequence belongs to the MYB-CC family. As to quaternary structure, isoform 1: Homodimer. Isoform 3: Does not form homodimer. Expressed in phloem and/or cambium.

It localises to the nucleus. Transcriptional activator that may activate the transcription of specific genes involved in nitrogen uptake or assimilation. Acts redundantly with MYR1 as a repressor of flowering and organ elongation under decreased light intensity. Represses gibberellic acid (GA)-dependent responses and affects levels of bioactive GA. This Arabidopsis thaliana (Mouse-ear cress) protein is Myb-related protein 2.